The sequence spans 618 residues: Poly(A)-specific ribonuclease PARN-like (618 aa).

Residues S54, Q56, D332, and N418 each coordinate a divalent metal cation. The tract at residues 588–607 is disordered; the sequence is ALESSDTDPDSDTKPSEIDW.

This sequence belongs to the CAF1 family. A divalent metal cation serves as cofactor.

It is found in the nucleus. The protein localises to the cytoplasm. The enzyme catalyses Exonucleolytic cleavage of poly(A) to 5'-AMP.. 3'-exoribonuclease that has a preference for poly(A) tails of mRNAs, thereby efficiently degrading poly(A) tails. Exonucleolytic degradation of the poly(A) tail is often the first step in the decay of eukaryotic mRNAs. This chain is Poly(A)-specific ribonuclease PARN-like, found in Arabidopsis thaliana (Mouse-ear cress).